An 819-amino-acid polypeptide reads, in one-letter code: MAHEGEQFIKDIQREYVDFLDDEEDQGIYAGHVKDMIAEKSKRLIVNVNDLKRKNPQRALGLLSNAADEQLAFGRALKEYASTVDPGYAKMHEDLFVGFEGCFGNRHVTPRSLTSIYLGNMVCVEGIVTKVSLIRPKVVRSVHYCPNTRKVMERKYTDLTSFEAVPSGAAYPTKDEDGNLLETEYGLSVYKDHQTLTIQEMPEKAPAGQLPRSVDIVCDDDLVDRCKPGDRVQIVGSYRCLPGKRGGYTSGTFRTVLLANNISLLSKESNLDISREDIMLCKKLAKNNDIFELLSKSLAPSIHGHAYVKQAILCLLLGGVEKILPNGTRLRGDINVLLIGDPSVAKSQLLRYVLNTAPRAIPTTGRGSSGVGLTAAVTTDQETGERRLEAGAMVLADRGVVCIDEFDKMSDIDRTAIHEVMEQGRVTISKAGIHASLNARCSVLAAANPVYGRYDQYKTPMENIGLQDSLLSRFDLLFVMLDVIDSDVDQMISDHVVRMHRYRNPKEADGEPLSMGSSYADSLSFVSSSEEKKDTEVYEKYDALLHGKSRQRHEKILSVEFMRKYIHIAKCMKPKLGEQACEAIANEYSRLRSQEAVETDVARTQPITARTLETLIRLSTAHARARMSKSVTIDDAHAAIELVQFAYFKKVLDKDRPSKRRRNSGSDAEDDNGEASSQRSPSRRSKRTRTATVGADSDEEDIEPPQPDAGDLTRRETRRSLPARSVAMLMASPSSEEQSVATSTTEPAIISDARLGEFKNNLQRLFREAREQSLALARITTAINVGSQEPFTAGEIEAAVHRMTEDNQIMVADDIVFLI.

The MCM domain occupies isoleucine 290–valine 496. ADP is bound by residues glutamine 348, leucine 388, glutamate 389, alanine 390, and alanine 392. Residues serine 472–aspartate 475 carry the Arginine finger motif. Serine 522 bears the Phosphoserine mark. Tyrosine 538 carries the phosphotyrosine modification. A disordered region spans residues aspartate 655–threonine 717. Phosphoserine occurs at positions 664, 666, 680, and 682. 2 positions are modified to phosphothreonine: threonine 690 and threonine 692. A phosphoserine mark is found at serine 697, serine 735, and serine 739.

Belongs to the MCM family. In terms of assembly, component of the Mcm2-7 complex. The complex forms a toroidal hexameric ring with the proposed subunit order Mcm2-Mcm6-Mcm4-Mcm7-Mcm3-Mcm5.

The protein resides in the nucleus. Its subcellular location is the chromosome. It carries out the reaction ATP + H2O = ADP + phosphate + H(+). Functionally, acts as a component of the Mcm2-7 complex (Mcm complex) (Mcm complex) which is the putative replicative helicase essential for 'once per cell cycle' DNA replication initiation and elongation in eukaryotic cells. Core component of CDC45-MCM-GINS (CMG) helicase, the molecular machine that unwinds template DNA during replication, and around which the replisome is built. The active ATPase sites in the Mcm2-7 ring are formed through the interaction surfaces of two neighboring subunits such that a critical structure of a conserved arginine finger motif is provided in trans relative to the ATP-binding site of the Walker A box of the adjacent subunit. The six ATPase active sites, however, are likely to contribute differentially to the complex helicase activity. This chain is DNA replication licensing factor Mcm3 (Mcm3), found in Drosophila melanogaster (Fruit fly).